The following is a 108-amino-acid chain: Monothiol bacilliredoxin BrxC (108 aa).

The residue at position 31 (C31) is an S-bacillithiol cysteine disulfide.

As to quaternary structure, interacts with AbrB, BdhA, Bdr, BrxB, FolD, GapA, GapB, GatA, PfkA, PyrAA, PyrAB, PyrE, PyrG, PyrH, RpsB, RpsK, RpsL, SalA, SucC, Tuf and YtsJ. Cys can react with bacillithiol (BSH) to form mixed disulfides. S-bacillithiolation protects Cys residues against overoxidation by acting as a redox switch in response to oxidative stress.

Its function is as follows. S-bacillithiolation is the formation of mixed disulfide bonds between protein thiols and the general thiol reductant bacillithiol (BSH) under oxidative stress. BSH is an equivalent of glutathione (GSH) in Firmicutes. This protein is a monothiol bacilliredoxin, which debacillithiolates (removes BSH) the S-bacillithiolated glyceraldehyde-3-phosphate dehydrogenases (GAPDHs) GapA and GapB in vivo and probably a number of other oxidized cytosolic proteins. Debacillithiolates the S-bacillithiolated Bdr (Bdr-SSB) and BrxB (BrxB-SSB) in vitro. Involved in maintaining redox homeostasis in response to disulfide stress conditions. This chain is Monothiol bacilliredoxin BrxC, found in Bacillus subtilis (strain 168).